Reading from the N-terminus, the 475-residue chain is Ribulose bisphosphate carboxylase large chain (475 aa).

A propeptide spanning residues 1–2 is cleaved from the precursor; sequence MS. An N-acetylproline modification is found at proline 3. Lysine 14 carries the N6,N6,N6-trimethyllysine modification. Substrate is bound by residues asparagine 123 and threonine 173. The Proton acceptor role is filled by lysine 175. A substrate-binding site is contributed by lysine 177. Residues lysine 201, aspartate 203, and glutamate 204 each coordinate Mg(2+). N6-carboxylysine is present on lysine 201. Catalysis depends on histidine 294, which acts as the Proton acceptor. Residues arginine 295, histidine 327, and serine 379 each contribute to the substrate site.

It belongs to the RuBisCO large chain family. Type I subfamily. Heterohexadecamer of 8 large chains and 8 small chains; disulfide-linked. The disulfide link is formed within the large subunit homodimers. Requires Mg(2+) as cofactor. The disulfide bond which can form in the large chain dimeric partners within the hexadecamer appears to be associated with oxidative stress and protein turnover.

The protein resides in the plastid. It is found in the chloroplast. It carries out the reaction 2 (2R)-3-phosphoglycerate + 2 H(+) = D-ribulose 1,5-bisphosphate + CO2 + H2O. The enzyme catalyses D-ribulose 1,5-bisphosphate + O2 = 2-phosphoglycolate + (2R)-3-phosphoglycerate + 2 H(+). In terms of biological role, ruBisCO catalyzes two reactions: the carboxylation of D-ribulose 1,5-bisphosphate, the primary event in carbon dioxide fixation, as well as the oxidative fragmentation of the pentose substrate in the photorespiration process. Both reactions occur simultaneously and in competition at the same active site. In Liquidambar styraciflua (Sweetgum tree), this protein is Ribulose bisphosphate carboxylase large chain.